We begin with the raw amino-acid sequence, 467 residues long: Acetaldehyde dehydrogenase (acetylating) EutE (467 aa).

The interval 1–19 (MNQQDIEQVVKAVLLKMKD) is targets protein to the BMC.

The protein belongs to the EutE/PduP family. As to quaternary structure, interacts with EutS, which targets it to the interior of the BMC.

It is found in the bacterial microcompartment. The enzyme catalyses acetaldehyde + NAD(+) + CoA = acetyl-CoA + NADH + H(+). It participates in amine and polyamine degradation; ethanolamine degradation. Acts as the second step in ethanolamine degradation by converting acetaldehyde into acetyl-CoA. Has a very strong preference for NAD(+) over NADP(+) in both catalytic directions. May play a role in bacterial microcompartment (BMC) assembly or maintenance. Directly targeted to the BMC. In terms of biological role, expression of the eut operon allows this bacteria to use ethanolamine (EA) as a carbon, nitrogen and energy source. It relies on cobalamin (vitamin B12) both as a cofactor for the ethanolamine ammonia-lyase (EAL) activity and to induce the operon. EA enhances bacterial survival in macrophages in a concentration-dependent manner, suggesting it is an important nutrient during infection. This chain is Acetaldehyde dehydrogenase (acetylating) EutE, found in Salmonella typhimurium (strain LT2 / SGSC1412 / ATCC 700720).